Here is a 1489-residue protein sequence, read N- to C-terminus: MDVNVGLSRLQSQAGAPVGTKGSNTRLAAKQRETLQAYDYLCRVDEAKKWIEECLGTDLGPTSTFEQSLRNGVVLALLVQKFQPDKLIKIFYSNELQFRHSDNINKFLDFIHGIGLPEIFHFELTDIYEGKNLPKVIYCIHALSYFLSMQDLAPPLIKSDENLSFTDEDVSIIVRRLRQSNVILPNFKALSADFMLRASPVSSRTPSPTRFPKHARFQTLNSSDSASIYSSPYTSPTLEFSKKDASARSDILKMHRRTKSATPSLEQFNEPYKQTLPSHSIEFEDSFFQPPSQKGHMQRSFLTTFSAPTRRREALFSTTSGLSQRSPVDEKIVNAIQACGRGVLVRLRLVDMLQSLVEQSSSVVLLQAVIRGYISRNTYRIRKKAYDELVNWVTSIQSISRAYLIRAQYRKVVLQEEATKSIQTLQSIIRGGFYRRKYHSLIERLDLFTPSFVLIQSSALGFLTRHAIVNMLDNLYNYIPLFNRMQSILRANMFRNEWSNFLDSVQSFPVSFHSICKGRLIRDSINRLNGSLLGELDNFIKLQNLSRGFMIRRAFKEKLEKLKASTSSFIALQAIVRAFLLRKNLESIYDSFQKSHLSVIKAQSLYRGFITRTKIDYCNDYLLKRLPDIVFMQSAVRAILLRDDVNYTEVQLDSFIPEIVLLQSLIRGYLSRNKFSRKLQNFHKNMENPIVAKSIFRGRQEGLAYRELATAKNPPVMTVKNFVHLLDDTNFDFEEEVLLEKMRKEIVQQVRDNEEIEVHINELDVKIALLVKNKISLDDVLKHHNKYKFGKQSTEYLKINTLSMKSLNNSSRKFLELYQCFFYVLQTNEMYLANYFQALKTEGTSSVKIRHAVYLVLQIFGHGSNRREEVLLLRFISQVIKLEAALVNSSQDLLSDDCVWKLLFTGYRGDVREVKLWKTILGRIHKVLVADNHLDFEINPLTLFKSFNPEVASQTDSPKLTLSLAMQHPPTRNLYVSRLRELRKLCQSFLVALSKNIENIPYALCYTAAQLKNSLQRYFPAAHKEEIFGVIGKFVYWAYVAPVLVSPDNFKLVDGSITALQRKNLYTLSSILSEIFSIESCDSKQLGFFRPLSEFIEVSKQDTMLMLERLVDVVDPEVYFEFDAFEDLVNTKRPVIYMKRDDILGIYSSIAYVIDSIAPPDVNDPLRAVVNSLGPVSEQDNDFVQDETDVKLELNPKFCTIENPVAQERTLIVQTKRYILFIIRIQNGLNLLEILVKPVTDSDEAAWQNLLAEESEKNARNYDLFDDSIFSMSFAELKYTALSNIVEMEKLGFANRRNNYQDMVNSIALDIRNKSRRRMQRQRELDAGHQSLLNLREKRAFLDSQLKSYNEYIEQAMETLQSKKGKKKLIPFSKQYFHMRDLRKSGRVPRFGSFKYPALKLYDRGVLVSISHMPQKEKLYITISADEVGKFILEATSPTVKVSSPRCELHLDDLLSAQYNKVLTLDVLDGRLKLNTNMFLHLIFSKFYS.

The 107-residue stretch at 41–147 (LCRVDEAKKW…YCIHALSYFL (107 aa)) folds into the Calponin-homology (CH) domain. IQ domains are found at residues 359–388 (QSSS…AYDE), 389–418 (LVNW…QEEA), 418–449 (ATKS…DLFT), 535–564 (ELDN…KLKA), 565–594 (STSS…SFQK), and 655–684 (FIPE…NFHK). A coiled-coil region spans residues 734–770 (EEEVLLEKMRKEIVQQVRDNEEIEVHINELDVKIALL). The Ras-GAP domain maps to 870 to 1110 (VLLLRFISQV…QDTMLMLERL (241 aa)). A coiled-coil region spans residues 1330–1364 (QSLLNLREKRAFLDSQLKSYNEYIEQAMETLQSKK).

In terms of assembly, interacts with calmodulin cam1.

The protein localises to the cytoplasm. The protein resides in the cytoskeleton. Its subcellular location is the nucleus envelope. It is found in the microtubule organizing center. It localises to the spindle pole body. Component of the contractile F-actin ring; required for its construction following assembly of F-actin at the division site. This chain is Ras GTPase-activating-like protein rng2, found in Schizosaccharomyces pombe (strain 972 / ATCC 24843) (Fission yeast).